We begin with the raw amino-acid sequence, 796 residues long: Cadherin-11 (796 aa).

The first 22 residues, 1–22, serve as a signal peptide directing secretion; sequence MKENYCLQAALVCLGMLCHSHA. Positions 23–53 are excised as a propeptide; sequence FAPERRGHLRPSFHGHHEKGKEGQVLQRSKR. 5 Cadherin domains span residues 54-159, 160-268, 269-383, 384-486, and 487-612; these read GWVW…PPEF, LHET…PPKF, PQSV…PPMF, LAPS…DNAP, and KFAA…YILN. The Extracellular segment spans residues 54-617; sequence GWVWNQFFVI…AYILNAGLST (564 aa). Residues Asn455 and Asn540 are each glycosylated (N-linked (GlcNAc...) asparagine). A helical membrane pass occupies residues 618–640; that stretch reads GALIAILACIVILLVIVVLFVTL. The Cytoplasmic portion of the chain corresponds to 641 to 796; the sequence is RRQKKEPLIV…GSKDTFDDDS (156 aa). A Phosphoserine modification is found at Ser788. Residue Thr791 is modified to Phosphothreonine.

As to quaternary structure, interacts with PCDH8. Expressed mainly in brain but also found in other tissues. Expressed in neuroblasts. In the embryo from 67 to 72 days of gestation, detected at high levels in facial mesenchyme including the central palatal mesenchyme, dental mesenchyme, the eye and optic muscle, and the tongue (at protein level).

The protein resides in the cell membrane. Its function is as follows. Cadherins are calcium-dependent cell adhesion proteins. They preferentially interact with themselves in a homophilic manner in connecting cells; cadherins may thus contribute to the sorting of heterogeneous cell types. Required for proper focal adhesion assembly. Involved in the regulation of cell migration. The protein is Cadherin-11 (CDH11) of Homo sapiens (Human).